The sequence spans 285 residues: Casein kinase II subunit beta-2 (285 aa).

The segment at 226–285 (FKDAEDEAELDDDDEEEEEEEEEEEELAAMDEAEGAQQQHAAAAAGTATGGVAAGGEGVH) is disordered. A compositionally biased stretch (acidic residues) spans 229-259 (AEDEAELDDDDEEEEEEEEEEEELAAMDEAE). A compositionally biased stretch (low complexity) spans 260–272 (GAQQQHAAAAAGT). The span at 273–285 (ATGGVAAGGEGVH) shows a compositional bias: gly residues.

This sequence belongs to the casein kinase 2 subunit beta family. Tetramer composed of two alpha chains, one beta chain and one beta' chain. Phosphorylated by alpha subunit.

In terms of biological role, regulatory subunit of casein kinase II/CK2. As part of the kinase complex regulates the basal catalytic activity of the alpha subunit a constitutively active serine/threonine-protein kinase that phosphorylates a large number of substrates containing acidic residues C-terminal to the phosphorylated serine or threonine. This is Casein kinase II subunit beta-2 (ckb-2) from Neurospora crassa (strain ATCC 24698 / 74-OR23-1A / CBS 708.71 / DSM 1257 / FGSC 987).